We begin with the raw amino-acid sequence, 211 residues long: Transcription antitermination protein NusB (211 aa).

The segment at 152 to 211 (PAKKERVANPFPSTPPKKPENVPNPFSTPFKKNSSEPIRNPFEGNKSPQPPQKTLRRKKK) is disordered. Residues 175 to 188 (NPFSTPFKKNSSEP) are compositionally biased toward polar residues.

The protein belongs to the NusB family.

In terms of biological role, involved in transcription antitermination. Required for transcription of ribosomal RNA (rRNA) genes. Binds specifically to the boxA antiterminator sequence of the ribosomal RNA (rrn) operons. The polypeptide is Transcription antitermination protein NusB (Chloroherpeton thalassium (strain ATCC 35110 / GB-78)).